The chain runs to 145 residues: Large ribosomal subunit protein uL14m (145 aa).

The N-terminal 30 residues, 1–30, are a transit peptide targeting the mitochondrion; that stretch reads MAFFTGLWGPFTCVSRVLSHHCFSTTGSLS.

It belongs to the universal ribosomal protein uL14 family. Component of the mitochondrial large ribosomal subunit (mt-LSU). Mature mammalian 55S mitochondrial ribosomes consist of a small (28S) and a large (39S) subunit. The 28S small subunit contains a 12S ribosomal RNA (12S mt-rRNA) and 30 different proteins. The 39S large subunit contains a 16S rRNA (16S mt-rRNA), a copy of mitochondrial valine transfer RNA (mt-tRNA(Val)), which plays an integral structural role, and 52 different proteins. Interacts with MALSU1.

It localises to the mitochondrion. In terms of biological role, forms part of 2 intersubunit bridges in the assembled ribosome. Upon binding to MALSU1 intersubunit bridge formation is blocked, preventing ribosome formation and repressing translation. This chain is Large ribosomal subunit protein uL14m (MRPL14), found in Homo sapiens (Human).